We begin with the raw amino-acid sequence, 177 residues long: NADH-quinone oxidoreductase subunit B (177 aa).

Positions 53, 54, 118, and 148 each coordinate [4Fe-4S] cluster.

This sequence belongs to the complex I 20 kDa subunit family. In terms of assembly, NDH-1 is composed of 14 different subunits. Subunits NuoB, C, D, E, F, and G constitute the peripheral sector of the complex. Requires [4Fe-4S] cluster as cofactor.

The protein resides in the cell membrane. It carries out the reaction a quinone + NADH + 5 H(+)(in) = a quinol + NAD(+) + 4 H(+)(out). Its function is as follows. NDH-1 shuttles electrons from NADH, via FMN and iron-sulfur (Fe-S) centers, to quinones in the respiratory chain. The immediate electron acceptor for the enzyme in this species is believed to be a menaquinone. Couples the redox reaction to proton translocation (for every two electrons transferred, four hydrogen ions are translocated across the cytoplasmic membrane), and thus conserves the redox energy in a proton gradient. The protein is NADH-quinone oxidoreductase subunit B of Anoxybacillus flavithermus (strain DSM 21510 / WK1).